The chain runs to 156 residues: dCTP deaminase (156 aa).

DCTP contacts are provided by residues 79 to 84, D95, Q124, and Y138; that span reads RSSLAR.

It belongs to the dCTP deaminase family. As to quaternary structure, homotrimer.

The enzyme catalyses dCTP + H2O + H(+) = dUTP + NH4(+). It functions in the pathway pyrimidine metabolism; dUMP biosynthesis; dUMP from dCTP (dUTP route): step 1/2. In terms of biological role, catalyzes the deamination of dCTP to dUTP. This chain is dCTP deaminase, found in Pyrococcus furiosus (strain ATCC 43587 / DSM 3638 / JCM 8422 / Vc1).